The chain runs to 697 residues: Potassium-transporting ATPase ATP-binding subunit (697 aa).

Helical transmembrane passes span 55–75 (PIMF…FLPS), 82–102 (GWFN…ANFA), 245–265 (LTLI…YLGF), and 271–291 (VLVA…LSAI). D324 acts as the 4-aspartylphosphate intermediate in catalysis. Residues D361, E365, 393 to 400 (FKAETRMS), and K412 contribute to the ATP site. The Mg(2+) site is built by D535 and D539. 3 helical membrane-spanning segments follow: residues 605 to 625 (FAII…LNIM), 633 to 653 (AILS…PLAM), and 677 to 697 (GGVI…GLFI).

It belongs to the cation transport ATPase (P-type) (TC 3.A.3) family. Type IA subfamily. As to quaternary structure, the system is composed of three essential subunits: KdpA, KdpB and KdpC.

It is found in the cell membrane. The catalysed reaction is K(+)(out) + ATP + H2O = K(+)(in) + ADP + phosphate + H(+). In terms of biological role, part of the high-affinity ATP-driven potassium transport (or Kdp) system, which catalyzes the hydrolysis of ATP coupled with the electrogenic transport of potassium into the cytoplasm. This subunit is responsible for energy coupling to the transport system and for the release of the potassium ions to the cytoplasm. The protein is Potassium-transporting ATPase ATP-binding subunit of Bacillus mycoides (strain KBAB4) (Bacillus weihenstephanensis).